The following is a 559-amino-acid chain: Formate--tetrahydrofolate ligase (559 aa).

An ATP-binding site is contributed by threonine 68–threonine 75.

The protein belongs to the formate--tetrahydrofolate ligase family.

It catalyses the reaction (6S)-5,6,7,8-tetrahydrofolate + formate + ATP = (6R)-10-formyltetrahydrofolate + ADP + phosphate. It functions in the pathway one-carbon metabolism; tetrahydrofolate interconversion. The protein is Formate--tetrahydrofolate ligase of Rhizobium rhizogenes (strain K84 / ATCC BAA-868) (Agrobacterium radiobacter).